The chain runs to 325 residues: Phospholipid phosphatase-related protein type 1 (325 aa).

N5 is a glycosylation site (N-linked (GlcNAc...) asparagine). 3 helical membrane-spanning segments follow: residues 13 to 33, 67 to 87, and 127 to 147; these read IIPCFIFVELVIMAGTVLLAY, FISPLVLYCVLAATPTAIIFI, and FIGVFAFGLFATDIFVNAGQV. N-linked (GlcNAc...) asparagine glycosylation occurs at N163. The next 3 membrane-spanning stretches (helical) occupy residues 201–218, 230–247, and 257–277; these read AALSIYSALYATMYITST, VLCLGTLCTAFLTGLNRV, and VIAGFILGTAVALFLGMCVVH. Phosphoserine is present on S307. Residue N316 is glycosylated (N-linked (GlcNAc...) asparagine).

The protein belongs to the PA-phosphatase related phosphoesterase family.

The protein localises to the cell membrane. It localises to the cell projection. Its subcellular location is the neuron projection. In terms of biological role, may play a role in neurite outgrowth and neurogenesis. The sequence is that of Phospholipid phosphatase-related protein type 1 from Mus musculus (Mouse).